The primary structure comprises 318 residues: Olfactory receptor 13C7 (318 aa).

The Extracellular portion of the chain corresponds to 1–27; sequence MVSANQTASVTEFILLGLSAHPKLEKT. Residues 28-48 traverse the membrane as a helical segment; sequence FFVLILLMYLVILLGNGVLIL. The Cytoplasmic portion of the chain corresponds to 49–61; it reads MTVSNSHLHMPMY. A helical membrane pass occupies residues 62-82; it reads FFLGNLSFLDICYTTSSVPLI. Residues 83-100 are Extracellular-facing; it reads LDSFLTPRKTISFSACAV. A helical membrane pass occupies residues 101-121; the sequence is QMFLSFAMGATECVLLSMMAF. At 122–181 the chain is on the cytoplasmic side; sequence DRYVAICNPLRYPVVMSKAAYMPKAAGSWVAGSTASMVQTSLAMRLPFCGDNIINHFTCE. The chain crosses the membrane as a helical span at residues 182-202; it reads ILAVLKLACADISVNVISMGV. Residues 203–205 are Extracellular-facing; the sequence is TNV. The chain crosses the membrane as a helical span at residues 206–226; sequence IFLGVPVLFISFSYVFIIATI. At 227–238 the chain is on the cytoplasmic side; it reads LRIPSAEGRKKA. A helical transmembrane segment spans residues 239-259; the sequence is FSTCSAHLTVVVIFYGTILFM. The Extracellular segment spans residues 260–278; it reads YGKPKSKDPLGADKQDLAD. Residues 279–289 form a helical membrane-spanning segment; the sequence is KLISLFYGVVT. At 290-318 the chain is on the cytoplasmic side; it reads PMLNPIIYSLRNKDVKAAVRDLIFQKCFA.

The protein belongs to the G-protein coupled receptor 1 family.

Its subcellular location is the cell membrane. In terms of biological role, odorant receptor. The chain is Olfactory receptor 13C7 from Homo sapiens (Human).